A 259-amino-acid chain; its full sequence is Ribonuclease HII (259 aa).

The RNase H type-2 domain occupies 69 to 257 (VAVCGVDEVG…VLEESQGLIY (189 aa)). A divalent metal cation contacts are provided by Asp75, Glu76, and Asp167.

The protein belongs to the RNase HII family. The cofactor is Mn(2+). Requires Mg(2+) as cofactor.

Its subcellular location is the cytoplasm. It catalyses the reaction Endonucleolytic cleavage to 5'-phosphomonoester.. Its function is as follows. Endonuclease that specifically degrades the RNA of RNA-DNA hybrids. The sequence is that of Ribonuclease HII from Shouchella clausii (strain KSM-K16) (Alkalihalobacillus clausii).